Reading from the N-terminus, the 86-residue chain is Cytochrome c oxidase subunit 6B1 (86 aa).

Alanine 2 is modified (N-acetylalanine). The CHCH domain occupies 27–73 (TRNCWQNYLDFHRCEKAMTAKGGDVSVCEWYRRVYKSLCPISWVSTW). Residues 30–40 (CWQNYLDFHRC) carry the Cx9C motif motif. 2 disulfide bridges follow: cysteine 30/cysteine 65 and cysteine 40/cysteine 54. Residues 54–65 (CEWYRRVYKSLC) carry the Cx10C motif motif. N6-acetyllysine is present on lysine 62.

The protein belongs to the cytochrome c oxidase subunit 6B family. In terms of assembly, component of the cytochrome c oxidase (complex IV, CIV), a multisubunit enzyme composed of 14 subunits. The complex is composed of a catalytic core of 3 subunits MT-CO1, MT-CO2 and MT-CO3, encoded in the mitochondrial DNA, and 11 supernumerary subunits COX4I, COX5A, COX5B, COX6A, COX6B, COX6C, COX7A, COX7B, COX7C, COX8 and NDUFA4, which are encoded in the nuclear genome. The complex exists as a monomer or a dimer and forms supercomplexes (SCs) in the inner mitochondrial membrane with NADH-ubiquinone oxidoreductase (complex I, CI) and ubiquinol-cytochrome c oxidoreductase (cytochrome b-c1 complex, complex III, CIII), resulting in different assemblies (supercomplex SCI(1)III(2)IV(1) and megacomplex MCI(2)III(2)IV(2)).

It localises to the mitochondrion inner membrane. The protein operates within energy metabolism; oxidative phosphorylation. Functionally, component of the cytochrome c oxidase, the last enzyme in the mitochondrial electron transport chain which drives oxidative phosphorylation. The respiratory chain contains 3 multisubunit complexes succinate dehydrogenase (complex II, CII), ubiquinol-cytochrome c oxidoreductase (cytochrome b-c1 complex, complex III, CIII) and cytochrome c oxidase (complex IV, CIV), that cooperate to transfer electrons derived from NADH and succinate to molecular oxygen, creating an electrochemical gradient over the inner membrane that drives transmembrane transport and the ATP synthase. Cytochrome c oxidase is the component of the respiratory chain that catalyzes the reduction of oxygen to water. Electrons originating from reduced cytochrome c in the intermembrane space (IMS) are transferred via the dinuclear copper A center (CU(A)) of subunit 2 and heme A of subunit 1 to the active site in subunit 1, a binuclear center (BNC) formed by heme A3 and copper B (CU(B)). The BNC reduces molecular oxygen to 2 water molecules using 4 electrons from cytochrome c in the IMS and 4 protons from the mitochondrial matrix. This Carlito syrichta (Philippine tarsier) protein is Cytochrome c oxidase subunit 6B1 (COX6B1).